Here is a 318-residue protein sequence, read N- to C-terminus: Glutathione synthetase (318 aa).

In terms of domain architecture, ATP-grasp spans 128–313 (KLAILNFSRF…VAAMFADAVA (186 aa)). ATP is bound at residue 154 to 210 (LKEHGDIIIKPLDGMGGMGIFRLTEKDPNIGSILETLMQLDSRTIMAQRYIPEIVHG). Positions 284 and 286 each coordinate Mg(2+).

The protein belongs to the prokaryotic GSH synthase family. Mg(2+) serves as cofactor. The cofactor is Mn(2+).

The catalysed reaction is gamma-L-glutamyl-L-cysteine + glycine + ATP = glutathione + ADP + phosphate + H(+). It functions in the pathway sulfur metabolism; glutathione biosynthesis; glutathione from L-cysteine and L-glutamate: step 2/2. The polypeptide is Glutathione synthetase (Neisseria meningitidis serogroup A / serotype 4A (strain DSM 15465 / Z2491)).